Reading from the N-terminus, the 638-residue chain is Replication protein E1 (638 aa).

The Nuclear localization signal motif lies at 84 to 86; that stretch reads KRK. Phosphoserine; by host is present on Ser90. The span at 90–119 shows a compositional bias: polar residues; that stretch reads SQNSPLQDITNQHRQQSDSQQNTHQVNNSQ. The tract at residues 90–133 is disordered; the sequence is SQNSPLQDITNQHRQQSDSQQNTHQVNNSQAKRRAVDSVPDSGY. A DNA-binding region region spans residues 176 to 342; it reads THVNSVTQIC…QTQLEHSFDD (167 aa). In terms of domain architecture, SF3 helicase spans 441–591; sequence VNFIYFLQVL…FPFDSNGNPV (151 aa). 467–474 lines the ATP pocket; the sequence is GPPNTGKS.

Belongs to the papillomaviridae E1 protein family. As to quaternary structure, can form hexamers. Interacts with E2 protein; this interaction increases E1 DNA binding specificity. Interacts with host DNA polymerase subunit POLA2. Interacts with host single stranded DNA-binding protein RPA1. Interacts with host TOP1; this interaction stimulates the enzymatic activity of TOP1. Post-translationally, phosphorylated.

The protein resides in the host nucleus. It carries out the reaction Couples ATP hydrolysis with the unwinding of duplex DNA by translocating in the 3'-5' direction.. The catalysed reaction is ATP + H2O = ADP + phosphate + H(+). In terms of biological role, ATP-dependent DNA 3'-5' helicase required for initiation of viral DNA replication. It forms a complex with the viral E2 protein. The E1-E2 complex binds to the replication origin which contains binding sites for both proteins. During the initial step, a dimer of E1 interacts with a dimer of protein E2 leading to a complex that binds the viral origin of replication with high specificity. Then, a second dimer of E1 displaces the E2 dimer in an ATP-dependent manner to form the E1 tetramer. Following this, two E1 monomers are added to each half of the site, which results in the formation of two E1 trimers on the viral ori. Subsequently, two hexamers will be created. The double hexamer acts as a bi-directional helicase machinery and unwinds the viral DNA and then recruits the host DNA polymerase to start replication. The polypeptide is Replication protein E1 (Homo sapiens (Human)).